The following is a 351-amino-acid chain: Cytoplasmic dynein 2 light intermediate chain 1 (351 aa).

Residues 304–335 are disordered; it reads TLKAIQDPARDPQYAESEVDEMRVQKDQELEQ. Residues 323–335 show a composition bias toward basic and acidic residues; sequence DEMRVQKDQELEQ.

It belongs to the dynein light intermediate chain family. In terms of assembly, light intermediate chain of the cytoplasmic dynein complex 2, a multisubunit complex composed at least of eleven different proteins. The cytoplasmic dynein 2 complex consists of two catalytic heavy chains (HCs) and a number of non-catalytic subunits presented by intermediate chains (ICs), light intermediate chains (LICs) and light chains (LCs). Among them, a heavy chain (DYNC2H1), two intermediate chains (DYNC2I2 and DYNC2I1), a light intermediate chain (DYNC2LI1), and a light chain (DYNLT2B) are unique to the dynein-2 complex, but a subset of light chains are also shared by dynein-1 and dynein-2 complexes. Dynein-2 complex is built around two copies of cytoplasmic dynein 2 heavy chain 1 (DYNC2H1). The C-terminal region forms the motor domain, which converts the energy from ATP hydrolysis into movement. Its N-terminal region forms the tail, an extended structure that binds the other subunits and holds the two heavy chains in a homodimer. Interacts with DYNC2H1 (via N-terminus); this interaction stabilizes the dynein-2 complex structure.

Its subcellular location is the cytoplasm. It is found in the cell projection. It localises to the cilium. The protein localises to the cytoskeleton. The protein resides in the cilium basal body. Its subcellular location is the cilium axoneme. It is found in the microtubule organizing center. It localises to the centrosome. Its function is as follows. Acts as one of several non-catalytic accessory components of the cytoplasmic dynein 2 complex (dynein-2 complex), a motor protein complex that drives the movement of cargos along microtubules within cilia and flagella in concert with the intraflagellar transport (IFT) system, facilitating the assembly of these organelles. Involved in the regulation of ciliary length. This chain is Cytoplasmic dynein 2 light intermediate chain 1 (Dync2li1), found in Rattus norvegicus (Rat).